Consider the following 1399-residue polypeptide: DNA-directed RNA polymerase subunit beta' (1399 aa).

The Zn(2+) site is built by cysteine 71, cysteine 73, cysteine 86, and cysteine 89. Residues aspartate 462, aspartate 464, and aspartate 466 each contribute to the Mg(2+) site. Zn(2+) is bound by residues cysteine 810, cysteine 884, cysteine 891, and cysteine 894.

It belongs to the RNA polymerase beta' chain family. As to quaternary structure, the RNAP catalytic core consists of 2 alpha, 1 beta, 1 beta' and 1 omega subunit. When a sigma factor is associated with the core the holoenzyme is formed, which can initiate transcription. The cofactor is Mg(2+). Zn(2+) is required as a cofactor.

The enzyme catalyses RNA(n) + a ribonucleoside 5'-triphosphate = RNA(n+1) + diphosphate. DNA-dependent RNA polymerase catalyzes the transcription of DNA into RNA using the four ribonucleoside triphosphates as substrates. This is DNA-directed RNA polymerase subunit beta' from Chelativorans sp. (strain BNC1).